The sequence spans 426 residues: Glutamate-1-semialdehyde 2,1-aminomutase (426 aa).

Position 265 is an N6-(pyridoxal phosphate)lysine (Lys-265).

This sequence belongs to the class-III pyridoxal-phosphate-dependent aminotransferase family. HemL subfamily. In terms of assembly, homodimer. It depends on pyridoxal 5'-phosphate as a cofactor.

Its subcellular location is the cytoplasm. It catalyses the reaction (S)-4-amino-5-oxopentanoate = 5-aminolevulinate. Its pathway is porphyrin-containing compound metabolism; protoporphyrin-IX biosynthesis; 5-aminolevulinate from L-glutamyl-tRNA(Glu): step 2/2. The chain is Glutamate-1-semialdehyde 2,1-aminomutase from Escherichia fergusonii (strain ATCC 35469 / DSM 13698 / CCUG 18766 / IAM 14443 / JCM 21226 / LMG 7866 / NBRC 102419 / NCTC 12128 / CDC 0568-73).